We begin with the raw amino-acid sequence, 74 residues long: Large ribosomal subunit protein uL29 (74 aa).

This sequence belongs to the universal ribosomal protein uL29 family.

This chain is Large ribosomal subunit protein uL29, found in Cyanothece sp. (strain PCC 7425 / ATCC 29141).